We begin with the raw amino-acid sequence, 816 residues long: Leucine--tRNA ligase (816 aa).

A 'HIGH' region motif is present at residues 40–51 (SYPSGSQLHAGH). Positions 576–580 (KMSKS) match the 'KMSKS' region motif. Lys579 serves as a coordination point for ATP.

This sequence belongs to the class-I aminoacyl-tRNA synthetase family.

The protein localises to the cytoplasm. The enzyme catalyses tRNA(Leu) + L-leucine + ATP = L-leucyl-tRNA(Leu) + AMP + diphosphate. This is Leucine--tRNA ligase from Clostridium perfringens (strain ATCC 13124 / DSM 756 / JCM 1290 / NCIMB 6125 / NCTC 8237 / Type A).